The following is a 118-amino-acid chain: Large ribosomal subunit protein uL18 (118 aa).

Belongs to the universal ribosomal protein uL18 family. As to quaternary structure, part of the 50S ribosomal subunit; part of the 5S rRNA/L5/L18/L25 subcomplex. Contacts the 5S and 23S rRNAs.

Functionally, this is one of the proteins that bind and probably mediate the attachment of the 5S RNA into the large ribosomal subunit, where it forms part of the central protuberance. This is Large ribosomal subunit protein uL18 from Rickettsia canadensis (strain McKiel).